Reading from the N-terminus, the 464-residue chain is Potassium/proton antiporter CemA (464 aa).

5 helical membrane passes run 36–56 (FSLS…TEIL), 241–261 (ASVS…QIAI), 341–361 (LLLR…LLIF), 389–409 (ILLL…EILV), and 425–445 (TPCF…YWIF).

The protein belongs to the CemA family.

The protein resides in the plastid. It is found in the chloroplast inner membrane. The catalysed reaction is K(+)(in) + H(+)(out) = K(+)(out) + H(+)(in). Functionally, contributes to K(+)/H(+) antiport activity by supporting proton efflux to control proton extrusion and homeostasis in chloroplasts in a light-dependent manner to modulate photosynthesis. Prevents excessive induction of non-photochemical quenching (NPQ) under continuous-light conditions. Indirectly promotes efficient inorganic carbon uptake into chloroplasts. This Adiantum capillus-veneris (Maidenhair fern) protein is Potassium/proton antiporter CemA.